The following is an 82-amino-acid chain: Small ribosomal subunit protein bS16 (82 aa).

Belongs to the bacterial ribosomal protein bS16 family.

The chain is Small ribosomal subunit protein bS16 from Blochmanniella floridana.